The chain runs to 826 residues: Receptor-like protein 18 (826 aa).

Over 1 to 780 (MRCQVWNVIE…EEDEEEVISW (780 aa)) the chain is Extracellular. LRR repeat units follow at residues 5 to 31 (VWNV…IFSL), 32 to 54 (QNLR…SLGN), 55 to 79 (FSSL…LGNL), 81 to 103 (HLTS…LGNL), 104 to 127 (SHLT…LGNL), 128 to 150 (SHLT…SFEN), and 151 to 177 (LSHL…SFNQ). N-linked (GlcNAc...) asparagine glycosylation is found at Asn12 and Asn54. 3 N-linked (GlcNAc...) asparagine glycosylation sites follow: Asn102, Asn126, and Asn150. The stretch at 178–198 (LVSLAVEENEFTGNFLLILLN) is one LRR 8; degenerate repeat. N-linked (GlcNAc...) asparagine glycans are attached at residues Asn198, Asn201, and Asn219. LRR repeat units follow at residues 199-223 (LTNL…MSSL), 225-247 (NLVL…LLNI), 248-271 (PSLS…NISS), 273-294 (LSDL…ISKL), 296-318 (NLYT…IFSD), 319-343 (LKLL…TFLS), 345-368 (FKSL…SVSN), 382-405 (PLLL…LRTQ), 406-429 (QTME…LWTL), 430-452 (PTLD…MVPS), 455-478 (QPSM…FICA), 479-500 (FTLQ…ENIS), 501-524 (ESLK…LVRI), 525-550 (SSLE…SLEE), 552-570 (QVLV…QTRF), 571-594 (PNLR…FFVN), 637-661 (LKIF…IGLL), 662-685 (KELH…MGKL), 686-709 (RELE…LGDL), and 711-734 (YLAY…QFLT). Asn268 is a glycosylation site (N-linked (GlcNAc...) asparagine). Residues Asn312, Asn331, Asn362, and Asn389 are each glycosylated (N-linked (GlcNAc...) asparagine). Residues Asn436, Asn439, Asn467, and Asn498 are each glycosylated (N-linked (GlcNAc...) asparagine). Asn538 carries an N-linked (GlcNAc...) asparagine glycan. N-linked (GlcNAc...) asparagine glycans are attached at residues Asn584 and Asn594. An N-linked (GlcNAc...) asparagine glycan is attached at Asn668. N-linked (GlcNAc...) asparagine glycans are attached at residues Asn716 and Asn736. Residues 781–801 (IAATIGFIPGIAFGLMMGYIL) form a helical membrane-spanning segment. Residues 802–826 (VCYKPEWFMNVFGKNKSRSTSSTTR) are Cytoplasmic-facing.

Belongs to the RLP family.

It is found in the cell membrane. This chain is Receptor-like protein 18, found in Arabidopsis thaliana (Mouse-ear cress).